The primary structure comprises 219 residues: MAHSCTAVVPLFKNLNDEARAAIDALTHERQVEKGTVLISPDTAAHLLVVAHGKLKTYQLATNGKEQLLRVDGVGDYEGEAGLLNIANPNVYTETLTAATVCTISATDFQQLLLKQPQISLQLLTENARKMQALEKQAGYLGNDSINVRLTHYLLDLRTAAGQDTVTVPMAWTQLADYLGTTPETVSRTLKRLAEEKLIERSGKQVRILNAEDMEDFAW.

An HTH crp-type domain is found at Asp144–Glu212. A DNA-binding region (H-T-H motif) is located at residues Lys191–Asn210.

The protein is Probable transcriptional regulator flp (flp) of Lacticaseibacillus casei (Lactobacillus casei).